The following is a 314-amino-acid chain: MESNGSVSSMVNLEKFLCERLVDQSQPISERFRALFSLRNLKGPGPRNALILASRDSSNLLAHEAAFALGQMQDAEAIPALESVLNDMSLHPIVRHEAAEALGAIGLAGNVNILKKSLSSDPAQEVRETCELALKRIEDMSNVDAENQSSTTEKSPFMSVDPAGPAASFSSVHQLRQVLLDETKGMYERYAALFALRNHGGEEAVSAIVDSLSASSALLRHEVAYVLGQLQSKTALATLSKVLRDVNEHPMVRHEAAEALGSIADEQSIALLEEFSKDPEPIVAQSCEVALSMLEFENSGKSFEFFFTQDPLVH.

Met-1 is subject to N-acetylmethionine. HEAT-like PBS-type repeat units follow at residues 61-87, 94-120, 188-214, 219-245, and 252-278; these read LAHE…VLND, VRHE…SLSS, ERYA…SLSA, LRHE…VLRD, and VRHE…FSKD. Fe cation-binding residues include His-63, Glu-64, His-96, and Glu-97. Fe cation is bound by residues His-221, Glu-222, His-254, and Glu-255.

Belongs to the deoxyhypusine hydroxylase family. The cofactor is Fe(2+).

The catalysed reaction is [eIF5A protein]-deoxyhypusine + AH2 + O2 = [eIF5A protein]-hypusine + A + H2O. It functions in the pathway protein modification; eIF5A hypusination. In terms of biological role, catalyzes the hydroxylation of the N(6)-(4-aminobutyl)-L-lysine intermediate to form hypusine, an essential post-translational modification only found in mature eIF-5A factor. The sequence is that of Deoxyhypusine hydroxylase from Arabidopsis thaliana (Mouse-ear cress).